Here is a 556-residue protein sequence, read N- to C-terminus: 2-succinyl-5-enolpyruvyl-6-hydroxy-3-cyclohexene-1-carboxylate synthase (556 aa).

This sequence belongs to the TPP enzyme family. MenD subfamily. In terms of assembly, homodimer. The cofactor is Mg(2+). Mn(2+) serves as cofactor. It depends on thiamine diphosphate as a cofactor.

The catalysed reaction is isochorismate + 2-oxoglutarate + H(+) = 5-enolpyruvoyl-6-hydroxy-2-succinyl-cyclohex-3-ene-1-carboxylate + CO2. Its pathway is quinol/quinone metabolism; 1,4-dihydroxy-2-naphthoate biosynthesis; 1,4-dihydroxy-2-naphthoate from chorismate: step 2/7. It functions in the pathway quinol/quinone metabolism; menaquinone biosynthesis. Its function is as follows. Catalyzes the thiamine diphosphate-dependent decarboxylation of 2-oxoglutarate and the subsequent addition of the resulting succinic semialdehyde-thiamine pyrophosphate anion to isochorismate to yield 2-succinyl-5-enolpyruvyl-6-hydroxy-3-cyclohexene-1-carboxylate (SEPHCHC). The protein is 2-succinyl-5-enolpyruvyl-6-hydroxy-3-cyclohexene-1-carboxylate synthase of Staphylococcus epidermidis (strain ATCC 12228 / FDA PCI 1200).